Consider the following 131-residue polypeptide: Replicase polyprotein 1ab (131 aa).

The Nidovirus-type SAM-dependent 2'-O-MTase domain occupies 1–128; the sequence is ITEFSWNKYL…KLLNFGNHFI (128 aa).

In terms of biological role, the replicase polyprotein of coronaviruses is a multifunctional protein: it contains the activities necessary for the transcription of negative stranded RNA, leader RNA, subgenomic mRNAs and progeny virion RNA as well as proteinases responsible for the cleavage of the polyprotein into functional products. This is Replicase polyprotein 1ab (rep) from Sus scrofa (Pig).